A 422-amino-acid polypeptide reads, in one-letter code: Protein arginine methyltransferase NDUFAF7, mitochondrial (422 aa).

The N-terminal 28 residues, 1 to 28, are a transit peptide targeting the mitochondrion; it reads MRTLLRLKRLMPEVLWTKRSCSSSSINK.

It belongs to the NDUFAF7 family.

It is found in the mitochondrion. It catalyses the reaction L-arginyl-[protein] + 2 S-adenosyl-L-methionine = N(omega),N(omega)'-dimethyl-L-arginyl-[protein] + 2 S-adenosyl-L-homocysteine + 2 H(+). In terms of biological role, arginine methyltransferase involved in the assembly or stability of mitochondrial NADH:ubiquinone oxidoreductase complex (complex I). Acts by mediating symmetric dimethylation of 'Arg-118' of ndufs2 after it assembles into the complex I, stabilizing the early intermediate complex. In Danio rerio (Zebrafish), this protein is Protein arginine methyltransferase NDUFAF7, mitochondrial.